We begin with the raw amino-acid sequence, 157 residues long: Crossover junction endodeoxyribonuclease RuvC (157 aa).

Active-site residues include Asp-7, Glu-67, and Asp-140. The Mg(2+) site is built by Asp-7, Glu-67, and Asp-140.

This sequence belongs to the RuvC family. Homodimer which binds Holliday junction (HJ) DNA. The HJ becomes 2-fold symmetrical on binding to RuvC with unstacked arms; it has a different conformation from HJ DNA in complex with RuvA. In the full resolvosome a probable DNA-RuvA(4)-RuvB(12)-RuvC(2) complex forms which resolves the HJ. Requires Mg(2+) as cofactor.

The protein localises to the cytoplasm. It carries out the reaction Endonucleolytic cleavage at a junction such as a reciprocal single-stranded crossover between two homologous DNA duplexes (Holliday junction).. Its function is as follows. The RuvA-RuvB-RuvC complex processes Holliday junction (HJ) DNA during genetic recombination and DNA repair. Endonuclease that resolves HJ intermediates. Cleaves cruciform DNA by making single-stranded nicks across the HJ at symmetrical positions within the homologous arms, yielding a 5'-phosphate and a 3'-hydroxyl group; requires a central core of homology in the junction. The consensus cleavage sequence is 5'-(A/T)TT(C/G)-3'. Cleavage occurs on the 3'-side of the TT dinucleotide at the point of strand exchange. HJ branch migration catalyzed by RuvA-RuvB allows RuvC to scan DNA until it finds its consensus sequence, where it cleaves and resolves the cruciform DNA. The protein is Crossover junction endodeoxyribonuclease RuvC of Rickettsia typhi (strain ATCC VR-144 / Wilmington).